A 151-amino-acid chain; its full sequence is Large ribosomal subunit protein uL15 (151 aa).

A disordered region spans residues 1–58; sequence MTSISLDSLKPNKGARKRKTRKGRGIAAGQGASCGFGMRGQKSRSGRPTRPGFEGGQM. Positions 13-24 are enriched in basic residues; the sequence is KGARKRKTRKGR. Gly residues predominate over residues 26–38; sequence IAAGQGASCGFGM.

It belongs to the universal ribosomal protein uL15 family. As to quaternary structure, part of the 50S ribosomal subunit.

In terms of biological role, binds to the 23S rRNA. The sequence is that of Large ribosomal subunit protein uL15 from Prochlorococcus marinus (strain SARG / CCMP1375 / SS120).